Here is a 446-residue protein sequence, read N- to C-terminus: Putative F-box protein At1g32660 (446 aa).

Basic and acidic residues-rich tracts occupy residues 1-12 (MKRKDDDQEDRS) and 43-57 (NKLE…NPSK). Positions 1–57 (MKRKDDDQEDRSCSSASKLDPIPLDLKMATVPTKSHMKKSHQNKLEEDEKEDTNPSK) are disordered. Residues 57-107 (KLELDSLPLDLKMAILTRIPAKSLMKLRCVSKMWSSIIRSRGFIDSYYAIS) form the F-box domain.

This is Putative F-box protein At1g32660 from Arabidopsis thaliana (Mouse-ear cress).